The following is a 253-amino-acid chain: MAAVQIDDYGPWTTEPAPRRETDLQALQARLFADVADFLGGRDGYAFAGRFDNMVGAATGIAPAAFERLQERIRNRYPVTVSVGIGTARTPADALDAAGTALRDAGSAQDENRQEALSHRSPPGFAGTPGAVTIAHFDVVDATGTYTDTVSPVRAGTEIQGAVTTLAEYLYDTHDAVTQFVGGDNAIAVCPEIDAGIVDDATAHVREAAGVDFQVGVGHGDTPHDAGADAKHALETCRATGARVHGPWTTADD.

The disordered stretch occupies residues 102–125; sequence LRDAGSAQDENRQEALSHRSPPGF.

Belongs to the archaeal-type GTP cyclohydrolase family.

The catalysed reaction is GTP + 3 H2O = 2-amino-5-formylamino-6-(5-phospho-D-ribosylamino)pyrimidin-4(3H)-one + 2 phosphate + 2 H(+). In terms of biological role, catalyzes the formation of 2-amino-5-formylamino-6-ribofuranosylamino-4(3H)-pyrimidinone ribonucleotide monophosphate and inorganic phosphate from GTP. Also has an independent pyrophosphate phosphohydrolase activity. The sequence is that of GTP cyclohydrolase III 2 (gch32) from Halobacterium salinarum (strain ATCC 700922 / JCM 11081 / NRC-1) (Halobacterium halobium).